Consider the following 468-residue polypeptide: UDP-N-acetylmuramoyl-L-alanine--L-glutamate ligase (468 aa).

Position 122–128 (122–128 (GTKGKST)) interacts with ATP.

This sequence belongs to the MurCDEF family. MurD2 subfamily.

The protein resides in the cytoplasm. It catalyses the reaction UDP-N-acetyl-alpha-D-muramoyl-L-alanine + L-glutamate + ATP = UDP-N-acetyl-alpha-D-muramoyl-L-alanyl-L-glutamate + ADP + phosphate + H(+). It functions in the pathway cell wall biogenesis; peptidoglycan biosynthesis. In terms of biological role, cell wall formation. Catalyzes the addition of L-glutamate to the nucleotide precursor UDP-N-acetylmuramoyl-L-alanine. The chain is UDP-N-acetylmuramoyl-L-alanine--L-glutamate ligase from Xylella fastidiosa (strain 9a5c).